The following is a 339-amino-acid chain: MNTRFLDACWGKPVDTVPVWLMRQAGRYLPDYMRVRSKCTFLELCKTPELATEVTVQPVDILGVDAAILFSDILTPIEPMGMELDFTPGPVFAKPIRTMADVEALKIPKMETDVPYVLDAVKLLRKELATKVPLIGFGGAPFTLACYMVEGKGSKDFAALKKMMYADPEVYAALMDKITTMDMEYLNAQIKAGAQAIQIFDTWGGMLSPADYERYVLPYTQRLINGLDRTNIPVIHFVKGAGTMLEIVKQAGGDVMGLDWHVNLGKARDILGDMAVQGNLDPTVLFAPNEIIEREVKRVLDENAGRPGLIFNLGHGILPTVPPEKAIFMVDCVHRLSRK.

Substrate contacts are provided by residues R23–R27, D72, Y147, T202, and H315.

This sequence belongs to the uroporphyrinogen decarboxylase family. As to quaternary structure, homodimer.

Its subcellular location is the cytoplasm. The enzyme catalyses uroporphyrinogen III + 4 H(+) = coproporphyrinogen III + 4 CO2. It functions in the pathway porphyrin-containing compound metabolism; protoporphyrin-IX biosynthesis; coproporphyrinogen-III from 5-aminolevulinate: step 4/4. Catalyzes the decarboxylation of four acetate groups of uroporphyrinogen-III to yield coproporphyrinogen-III. This Citrifermentans bemidjiense (strain ATCC BAA-1014 / DSM 16622 / JCM 12645 / Bem) (Geobacter bemidjiensis) protein is Uroporphyrinogen decarboxylase.